The primary structure comprises 611 residues: Alpha-1,2-mannosyltransferase ALG9 (611 aa).

Over residues 1–10 (MASRRARQRL) the composition is skewed to basic residues. Residues 1–51 (MASRRARQRLKGGGGGGGGGGDAGPAAEKLEQLGSREAGAEPRPESGNKAG) form a disordered region. The Lumenal portion of the chain corresponds to 1–135 (MASRRARQRL…FHARILQTNK (135 aa)). Residues 11-23 (KGGGGGGGGGGDA) are compositionally biased toward gly residues. An N-linked (GlcNAc...) asparagine glycan is attached at N77. A helical transmembrane segment spans residues 136-156 (ILVFYFLRCLLAFVSCVCELY). Residues 157 to 171 (FYKAVCKKFGLHVSR) lie on the Cytoplasmic side of the membrane. The chain crosses the membrane as a helical span at residues 172–192 (MMLAFLVLSTGMFCSSSAFLP). The Lumenal portion of the chain corresponds to 193-213 (SSFCMYTTLIAMTGWYMDKTP). A helical transmembrane segment spans residues 214-234 (IAVLGVAAGAILGWPFSAALG). Topologically, residues 235–249 (LPIAFDLLARKHRWK) are cytoplasmic. The chain crosses the membrane as a helical span at residues 250 to 270 (SFLLWSLVALALFLVPVVVID). Topologically, residues 271–310 (SYYYGKLVVAPLNIVLYNVFTSHGPDLYGTEPWYFYLING) are lumenal. Residues 311-331 (FLNFNVAFALALLVLPLTFLM) form a helical membrane-spanning segment. At 332 to 342 (EYLLQRFHVQN) the chain is on the cytoplasmic side. The chain crosses the membrane as a helical span at residues 343 to 363 (LGHPYWLTLAPMYIWFIIFFI). The Lumenal segment spans residues 364–370 (QPHKEER). A helical membrane pass occupies residues 371–391 (FLFPVYPLICLCGAVALSALQ). At 392–405 (KCYHFVFQRYRLEH) the chain is on the cytoplasmic side. Residues 406–426 (YTVTSNWLALGTVFLFGLLSF) form a helical membrane-spanning segment. Residues 427-611 (SRSVALFRGY…AKPSRKKSGG (185 aa)) are Lumenal-facing. N-linked (GlcNAc...) asparagine glycosylation is found at N550 and N593.

The protein belongs to the glycosyltransferase 22 family.

The protein localises to the endoplasmic reticulum membrane. The catalysed reaction is an alpha-D-Man-(1-&gt;2)-alpha-D-Man-(1-&gt;2)-alpha-D-Man-(1-&gt;3)-[alpha-D-Man-(1-&gt;3)-alpha-D-Man-(1-&gt;6)]-beta-D-Man-(1-&gt;4)-beta-D-GlcNAc-(1-&gt;4)-alpha-D-GlcNAc-diphospho-di-trans,poly-cis-dolichol + a di-trans,poly-cis-dolichyl beta-D-mannosyl phosphate = an alpha-D-Man-(1-&gt;2)-alpha-D-Man-(1-&gt;2)-alpha-D-Man-(1-&gt;3)-[alpha-D-Man-(1-&gt;2)-alpha-D-Man-(1-&gt;3)-alpha-D-Man-(1-&gt;6)]-beta-D-Man-(1-&gt;4)-beta-D-GlcNAc-(1-&gt;4)-alpha-D-GlcNAc-diphospho-di-trans,poly-cis-dolichol + a di-trans,poly-cis-dolichyl phosphate + H(+). It catalyses the reaction an alpha-D-Man-(1-&gt;2)-alpha-D-Man-(1-&gt;2)-alpha-D-Man-(1-&gt;3)-[alpha-D-Man-(1-&gt;2)-alpha-D-Man-(1-&gt;3)-[alpha-D-Man-(1-&gt;6)]-alpha-D-Man-(1-&gt;6)]-beta-D-Man-(1-&gt;4)-beta-D-GlcNAc-(1-&gt;4)-alpha-D-GlcNAc-diphospho-di-trans,poly-cis-dolichol + a di-trans,poly-cis-dolichyl beta-D-mannosyl phosphate = an alpha-D-Man-(1-&gt;2)-alpha-D-Man-(1-&gt;2)-alpha-D-Man-(1-&gt;3)-[alpha-D-Man-(1-&gt;2)-alpha-D-Man-(1-&gt;3)-[alpha-D-Man-(1-&gt;2)-alpha-D-Man-(1-&gt;6)]-alpha-D-Man-(1-&gt;6)]-beta-D-Man-(1-&gt;4)-beta-D-GlcNAc-(1-&gt;4)-alpha-D-GlcNAc-diphospho-di-trans,poly-cis-dolichol + a di-trans,poly-cis-dolichyl phosphate + H(+). Its pathway is protein modification; protein glycosylation. Its function is as follows. Mannosyltransferase that operates in the biosynthetic pathway of dolichol-linked oligosaccharides, the glycan precursors employed in protein asparagine (N)-glycosylation. The assembly of dolichol-linked oligosaccharides begins on the cytosolic side of the endoplasmic reticulum membrane and finishes in its lumen. The sequential addition of sugars to dolichol pyrophosphate produces dolichol-linked oligosaccharides containing fourteen sugars, including two GlcNAcs, nine mannoses and three glucoses. Once assembled, the oligosaccharide is transferred from the lipid to nascent proteins by oligosaccharyltransferases. In the lumen of the endoplasmic reticulum, catalyzes the addition of the seventh and ninth alpha-1,2-linked mannose residues to Man(6)GlcNAc(2)-PP-dolichol and Man(8)GlcNAc(2)-PP-dolichol respectively. This Mus musculus (Mouse) protein is Alpha-1,2-mannosyltransferase ALG9.